An 875-amino-acid polypeptide reads, in one-letter code: Lysine-specific demethylase JMJ26 (875 aa).

Residues 31-103 form a disordered region; it reads KPVEATSLSS…RSSVKKRATT (73 aa). The Nuclear localization signal motif lies at 62-69; sequence RKRSKADE. Over residues 79–93 the composition is skewed to basic and acidic residues; it reads KCDDENKCEENEKKQ. The Zn(2+) site is built by C193, C196, C207, C210, C216, C219, C236, C239, C322, C325, C339, and C347. An RING-type; degenerate zinc finger spans residues 193–240; it reads CHQCSKGERRYLFICTFCEVRLYCFPCIKKWYPHLSTDDILEKCPFCR. The B box-type; degenerate zinc-finger motif lies at 317–347; that stretch reads EERVFCNHCATSIVDLHRSCPKCSYELCLNC. The region spanning 614 to 837 is the JmjC domain; the sequence is PRSGILNIAT…ECLRLTDEFR (224 aa). Fe cation contacts are provided by H658, D660, and H805.

The protein belongs to the JARID1 histone demethylase family. Requires Fe(2+) as cofactor. As to expression, expressed in inflorescences, roots, siliques, leaves and stems.

Its subcellular location is the nucleus. Its function is as follows. May function as histone H3 lysine demethylase and be involved in regulation of gene expression. This chain is Lysine-specific demethylase JMJ26, found in Arabidopsis thaliana (Mouse-ear cress).